The following is a 463-amino-acid chain: L-seryl-tRNA(Sec) selenium transferase (463 aa).

N6-(pyridoxal phosphate)lysine is present on K295.

This sequence belongs to the SelA family. As to quaternary structure, homodecamer; pentamer of dimers. Binds only one seryl-tRNA(Sec) per dimer. The cofactor is pyridoxal 5'-phosphate.

It localises to the cytoplasm. It catalyses the reaction L-seryl-tRNA(Sec) + selenophosphate + H(+) = L-selenocysteinyl-tRNA(Sec) + phosphate. Its pathway is aminoacyl-tRNA biosynthesis; selenocysteinyl-tRNA(Sec) biosynthesis; selenocysteinyl-tRNA(Sec) from L-seryl-tRNA(Sec) (bacterial route): step 1/1. Its function is as follows. Converts seryl-tRNA(Sec) to selenocysteinyl-tRNA(Sec) required for selenoprotein biosynthesis. This Shigella boydii serotype 4 (strain Sb227) protein is L-seryl-tRNA(Sec) selenium transferase.